The primary structure comprises 648 residues: Serine/arginine repetitive matrix protein 3 (648 aa).

Residues 1-44 are disordered; that stretch reads MSSTVNNGATGMPAPPDAANGFPQPGASSGSWPRAEEELRAAEP. A CWF21 domain is found at 55–98; the sequence is LDHERKRRVELKCMELQEMMEEQGYSEEEIRQKVGTFRQMLMEK. The span at 99–109 shows a compositional bias: basic and acidic residues; sequence EGVLTREDRPG. Disordered stretches follow at residues 99–139 and 154–648; these read EGVL…DGPV and YRTK…SGGF. Basic residues-rich tracts occupy residues 168–186, 199–211, and 219–243; these read PKKK…KKRR, LRKK…KHRR, and RRKR…RKRP. Composition is skewed to low complexity over residues 257 to 276 and 289 to 317; these read SASS…GSPS and TGSQ…NGGS. Over residues 381–409 the composition is skewed to basic residues; it reads ARRRRRRRRRRRSRSSANAPRRRGRRRTK. 3 stretches are compositionally biased toward low complexity: residues 414–428, 461–471, and 493–502; these read RGSS…SSSD, RPASTSPSPGT, and SWSSSRSPSK. Over residues 525–544 the composition is skewed to basic and acidic residues; that stretch reads LGRDKDSEGRARHAEAEAAR. Basic residues predominate over residues 545-560; the sequence is TRRRSRSYSPIRKRRR. Residues 579-648 show a composition bias toward low complexity; the sequence is IPYYRPSPSS…SRSSSESGGF (70 aa).

Belongs to the CWC21 family.

May play a role in regulating breast cancer cell invasiveness. May be involved in RYBP-mediated breast cancer progression. This Mus musculus (Mouse) protein is Serine/arginine repetitive matrix protein 3 (Srrm3).